We begin with the raw amino-acid sequence, 348 residues long: Histidinol-phosphate aminotransferase (348 aa).

The disordered stretch occupies residues 1–31 (MLPTRDCVRQTPAYTPGEQPQTAGFTKLNTN). A compositionally biased stretch (polar residues) spans 18-31 (EQPQTAGFTKLNTN). Lysine 207 carries the N6-(pyridoxal phosphate)lysine modification.

The protein belongs to the class-II pyridoxal-phosphate-dependent aminotransferase family. Histidinol-phosphate aminotransferase subfamily. In terms of assembly, homodimer. Pyridoxal 5'-phosphate serves as cofactor.

The enzyme catalyses L-histidinol phosphate + 2-oxoglutarate = 3-(imidazol-4-yl)-2-oxopropyl phosphate + L-glutamate. It functions in the pathway amino-acid biosynthesis; L-histidine biosynthesis; L-histidine from 5-phospho-alpha-D-ribose 1-diphosphate: step 7/9. The sequence is that of Histidinol-phosphate aminotransferase from Microcystis aeruginosa (strain NIES-843 / IAM M-2473).